The following is a 137-amino-acid chain: ATP synthase epsilon chain, chloroplastic (137 aa).

It belongs to the ATPase epsilon chain family. F-type ATPases have 2 components, CF(1) - the catalytic core - and CF(0) - the membrane proton channel. CF(1) has five subunits: alpha(3), beta(3), gamma(1), delta(1), epsilon(1). CF(0) has three main subunits: a, b and c.

It localises to the plastid. The protein resides in the chloroplast thylakoid membrane. Produces ATP from ADP in the presence of a proton gradient across the membrane. The sequence is that of ATP synthase epsilon chain, chloroplastic from Oryza nivara (Indian wild rice).